A 303-amino-acid chain; its full sequence is Pseudouridine-5'-phosphate glycosidase (303 aa).

The Proton donor role is filled by Glu-26. The substrate site is built by Lys-87 and Val-107. Residue Asp-139 coordinates Mn(2+). 141–143 (SAD) provides a ligand contact to substrate. The Nucleophile role is filled by Lys-160.

Belongs to the pseudouridine-5'-phosphate glycosidase family. In terms of assembly, homotrimer. Mn(2+) is required as a cofactor.

The enzyme catalyses D-ribose 5-phosphate + uracil = psi-UMP + H2O. Its function is as follows. Catalyzes the reversible cleavage of pseudouridine 5'-phosphate (PsiMP) to ribose 5-phosphate and uracil. Functions biologically in the cleavage direction, as part of a pseudouridine degradation pathway. The polypeptide is Pseudouridine-5'-phosphate glycosidase (Saccharopolyspora erythraea (strain ATCC 11635 / DSM 40517 / JCM 4748 / NBRC 13426 / NCIMB 8594 / NRRL 2338)).